Reading from the N-terminus, the 429-residue chain is tRNA modification GTPase MnmE (429 aa).

(6S)-5-formyl-5,6,7,8-tetrahydrofolate is bound by residues Arg20, Glu77, and Arg117. The TrmE-type G domain occupies 213–353 (GFEVAILGAP…LVKAVSHRLS (141 aa)). Asn223 provides a ligand contact to K(+). GTP-binding positions include 223 to 228 (NVGKSS), 242 to 248 (SSIAGTT), and 267 to 270 (DTAG). Ser227 provides a ligand contact to Mg(2+). 3 residues coordinate K(+): Ser242, Ile244, and Thr247. A Mg(2+)-binding site is contributed by Thr248. Lys429 serves as a coordination point for (6S)-5-formyl-5,6,7,8-tetrahydrofolate.

Belongs to the TRAFAC class TrmE-Era-EngA-EngB-Septin-like GTPase superfamily. TrmE GTPase family. Homodimer. Heterotetramer of two MnmE and two MnmG subunits. Requires K(+) as cofactor.

It localises to the cytoplasm. Functionally, exhibits a very high intrinsic GTPase hydrolysis rate. Involved in the addition of a carboxymethylaminomethyl (cmnm) group at the wobble position (U34) of certain tRNAs, forming tRNA-cmnm(5)s(2)U34. The sequence is that of tRNA modification GTPase MnmE from Dinoroseobacter shibae (strain DSM 16493 / NCIMB 14021 / DFL 12).